The chain runs to 62 residues: Large ribosomal subunit protein bL32 (62 aa).

Residues 1-16 (MAVPKRKTSPSRRGMR) are compositionally biased toward basic residues. The segment at 1 to 44 (MAVPKRKTSPSRRGMRRSADALKAPTYVEDKDSGELRRPHHIDL) is disordered. Basic and acidic residues predominate over residues 28 to 44 (VEDKDSGELRRPHHIDL).

This sequence belongs to the bacterial ribosomal protein bL32 family.

The protein is Large ribosomal subunit protein bL32 of Methylorubrum extorquens (strain CM4 / NCIMB 13688) (Methylobacterium extorquens).